A 584-amino-acid polypeptide reads, in one-letter code: BEL1-like homeodomain protein 8 (584 aa).

The segment at 266 to 282 is SR/KY domain; it reads SRFLEPAQKMLEEFCIS. Positions 292-317 are disordered; the sequence is ESTSMEDDDDDDDNLSGFSSSSEPLE. Residues 295–305 show a composition bias toward acidic residues; sequence SMEDDDDDDDN. The BELL domain stretch occupies residues 316-387; it reads LEPKNRLKKA…ALRTAIAEHV (72 aa). Residues 424 to 486 constitute a DNA-binding region (homeobox); the sequence is IWRPQRGLPE…NARVRLWKPM (63 aa). Residues 503 to 529 are disordered; sequence TSHNIEPSNRPNTVSSPSHEQTLTGLS.

It belongs to the TALE/BELL homeobox family. May form heterodimeric complex with the TALE/KNOX proteins STM and KNAT1/BP.

The protein localises to the nucleus. Functionally, required for specifying floral primordia and establishing early internode patterning events during inflorescence development. This chain is BEL1-like homeodomain protein 8 (BLH8), found in Arabidopsis thaliana (Mouse-ear cress).